The following is a 250-amino-acid chain: Probable capsid protein (250 aa).

The tract at residues 1–39 (MWLTFNQVARRRRPLAPRRRRWRRRYWXRRRRIPANRRG) is DNA-binding. The segment at 9 to 42 (ARRRRPLAPRRRRWRRRYWXRRRRIPANRRGHRT) is nuclear localization signals.

It belongs to the circoviridae capsid protein family. In terms of assembly, homomultimer. Assembles in the nucleus, presumably in an immature form, then migrates to the cytoplasm once assembled as mature virion. Interacts with Rep; this interaction relocates Rep into the nucleus.

The protein resides in the host nucleus. It is found in the virion. Functionally, self-assembles to form the virion icosahedral capsid with a T=1 symmetry. This very small capsid (17 - 22 nm in diameter) allows the virus to be very stable in the environment and resistant to some disinfectants, including detergents. Essential for the initial attachment to heparan sulfate moieties and chondroitin sulfate B of the host cell surface proteoglycans. After attachment, the virus is endocytosed and traffics to the nucleus. The capsid protein binds and transports the viral genome and Rep across the nuclear envelope. This Serinus (CaCV) protein is Probable capsid protein (Cap).